The sequence spans 295 residues: Mediator of RNA polymerase II transcription subunit 6 (295 aa).

The disordered stretch occupies residues 211-243 (TATAATNGNNAGGGSNKSSVRPTGGANMATVPS). Phosphoserine is present on serine 225.

This sequence belongs to the Mediator complex subunit 6 family. In terms of assembly, component of the Mediator complex, which is composed of at least 21 subunits that form three structurally distinct submodules. The Mediator head module contains MED6, MED8, MED11, SRB4/MED17, SRB5/MED18, ROX3/MED19, SRB2/MED20 and SRB6/MED22, the middle module contains MED1, MED4, NUT1/MED5, MED7, CSE2/MED9, NUT2/MED10, SRB7/MED21 and SOH1/MED31, and the tail module contains MED2, PGD1/MED3, RGR1/MED14, GAL11/MED15 and SIN4/MED16. The head and the middle modules interact directly with RNA polymerase II, whereas the elongated tail module interacts with gene-specific regulatory proteins. MED6 interacts directly with SRB4/MED17 and SRB7/MED21.

Its subcellular location is the nucleus. In terms of biological role, component of the Mediator complex, a coactivator involved in the regulated transcription of nearly all RNA polymerase II-dependent genes. Mediator functions as a bridge to convey information from gene-specific regulatory proteins to the basal RNA polymerase II transcription machinery. The Mediator complex, having a compact conformation in its free form, is recruited to promoters by direct interactions with regulatory proteins and serves for the assembly of a functional preinitiation complex with RNA polymerase II and the general transcription factors. The Mediator complex unfolds to an extended conformation and partially surrounds RNA polymerase II, specifically interacting with the unphosphorylated form of the C-terminal domain (CTD) of RNA polymerase II. The Mediator complex dissociates from the RNA polymerase II holoenzyme and stays at the promoter when transcriptional elongation begins. The chain is Mediator of RNA polymerase II transcription subunit 6 (MED6) from Saccharomyces cerevisiae (strain ATCC 204508 / S288c) (Baker's yeast).